The primary structure comprises 1457 residues: MKEVVVDVAPKCIKGIEFGALSAKDIIAQSEVEVHTRDLYDLEKGRIPKDGGALDTKMGISSNANECATCHGNLASCHGHFGHIKLALPVFHVGYFKATIQVLQCICKNCSAVLLDEQTKRSFLNDLRRPHIDNLRRMKILKKLLEQCKKQRRCLNCNHVNGVVKKAASGAGPAALKIVHDTFRWIGKKATPEKDLWDKEFDEVFSRNPELEKFVKRIHDDLNPLKVLNLFKQISPSDCELLGIDSARGGRPEMYIWRYLPAPPVCIRPSVMMDAQSNEDDLTIKLTEIVWTSSLIKAGIEKGISINNLMEQWDYLQLSVAMYINSDSANPALLPSSGGGSKSSKPIRGFCQRLKGKQGRFRGNLSGKRVDFSGRTVISPDPNLKIDEVAVPDRVAKVLTYPEKCTRYNRKKLQKLILSGPNVHPGANYLLKQNESAKRNLRFGDRVKLAKNLHIGDVVERHIEDGDIVLFNRQPSLHRLSILSHYAKIRPWRTFRLNECVCTPYNADFDGDEMNIHVPQTEEARAEAINLMGVKNNLLTPKSGEPIIAATQDFITGSYLVSHKDSFFDRASLVQLLCMMSDADIQFDIPPPAIFKPVMLWTGKQVFSLLIKPNKKSNVVINLDAKNKTYTPPAKGFPNEMSPNDGFVIIRGSQILSGVMDKSTLGDGKKHSVFYTILRDYGPDEAANAMNRMAKLCARYLGNRGFSIGINDVIPGSDLKQKKELMVEQAYLKCDELIDLYNRGNLETQPGCNEEQTLEAKIGGLLSKVREEVGEICINELDSANAPLIMATCGSKGSTLNVSQMVAVVGQQIISGNRVPDGFQDRSLPHFTKNSKTPQSKGFVRNSFFSGLTPPEFLFHSISGREGLVDTAVKTAETGYMSRRLMKSLDDLSAQYDHTVRNSSNGIVQFTYGGDGLDPFDMEGDARPVNFVRQWDHAYNITFDIEDKGLLPYQIIELVDSILHPLEDRLVRYDNVGKIIPLEDSDKIEYIDQNDAEREFYQSIREFTTNKATKLAEIREKKMLKPFLTEPAEDFIRLDESDESLVAINQLSKVSANSINKFLEQCIYKYSRAKVEPGTAVGAIGAQSIGEPGTQMTLKTFHFAGVASMNVTLGVPRIKEIINASKVISTPIINSVLVNDDDEIAARVVKGRVEKTLLEDVAYFIEDVYKNNMAYLSIKIDLNTIEKLQLELNIESIAHSIANAPKLKILAGDVSVTGKDRINVLVTLREPKSINLMKNASADYKGTDASIVNSLFFRMQHLKRALPRICIKGLPDISRAVINIRDDGKKELLVEGYGLKEVMSTDGVVGTKTSTNHILEVFQVLGIEAARASIIGEIDYTMSKHGMSVDPRHIQLLGDVMTYKGEVLGITRFGLSKMRDSVLQLASFEKTTDHLFDASFYMKNDKIEGVSECIILGQTMNIGTGAFKLVNSFDVDKKALEMKPTLFEGMCEVSATA.

Zn(2+) is bound by residues Cys-67, Cys-70, Cys-77, His-80, Cys-107, Cys-110, and Cys-154. Residues Asp-508, Asp-510, and Asp-512 each contribute to the Mg(2+) site. The bridging helix stretch occupies residues 854-866 (PPEFLFHSISGRE).

This sequence belongs to the RNA polymerase beta' chain family. Component of the RNA polymerase III (Pol III) complex consisting of 17 subunits.

The protein resides in the nucleus. The catalysed reaction is RNA(n) + a ribonucleoside 5'-triphosphate = RNA(n+1) + diphosphate. Functionally, DNA-dependent RNA polymerase catalyzes the transcription of DNA into RNA using the four ribonucleoside triphosphates as substrates. Largest and catalytic core component of RNA polymerase III which synthesizes small RNAs, such as 5S rRNA and tRNAs. Forms the polymerase active center together with the second largest subunit. A single-stranded DNA template strand of the promoter is positioned within the central active site cleft of Pol III. A bridging helix emanates from RPC1 and crosses the cleft near the catalytic site and is thought to promote translocation of Pol III by acting as a ratchet that moves the RNA-DNA hybrid through the active site by switching from straight to bent conformations at each step of nucleotide addition. This chain is DNA-directed RNA polymerase III subunit RPC1 (RPC1), found in Debaryomyces hansenii (strain ATCC 36239 / CBS 767 / BCRC 21394 / JCM 1990 / NBRC 0083 / IGC 2968) (Yeast).